The sequence spans 252 residues: Deoxyuridine 5'-triphosphate nucleotidohydrolase, mitochondrial (252 aa).

The N-terminal 69 residues, 1–69, are a transit peptide targeting the mitochondrion; the sequence is MTPLCPRPAL…AGRLSQGCRG (69 aa). Cys11, Ser88, and Ser99 each carry phosphoserine. Residues 78 to 104 form a disordered region; it reads WKGELPKAGGSPAPGPETPAISPSKRA. Residues 173–175, 187–193, Gly198, Arg241, and 246–247 each bind dUTP; these read RSG, GVIDEDY, and FG.

The protein belongs to the dUTPase family. As to quaternary structure, homotrimer. Requires Mg(2+) as cofactor. Post-translationally, nuclear isoform 2 is phosphorylated in vivo on Ser-11, a reaction that can be catalyzed in vitro by CDC2. Phosphorylation in mature T-cells occurs in a cell cycle-dependent manner. Isoform 3 is not phosphorylated. In terms of tissue distribution, found in a variety of tissues. Isoform 3 expression is constitutive, while isoform 2 expression correlates with the onset of DNA replication (at protein level). Isoform 2 degradation coincides with the cessation of nuclear DNA replication (at protein level).

Its subcellular location is the nucleus. The protein resides in the mitochondrion. It catalyses the reaction dUTP + H2O = dUMP + diphosphate + H(+). It functions in the pathway pyrimidine metabolism; dUMP biosynthesis; dUMP from dCTP (dUTP route): step 2/2. With respect to regulation, phosphorylation is necessary for activity. Catalyzes the cleavage of 2'-deoxyuridine 5'-triphosphate (dUTP) into 2'-deoxyuridine 5'-monophosphate (dUMP) and inorganic pyrophosphate and through its action efficiently prevents uracil misincorporation into DNA and at the same time provides dUMP, the substrate for de novo thymidylate biosynthesis. Inhibits peroxisome proliferator-activated receptor (PPAR) activity by binding of its N-terminal to PPAR, preventing the latter's dimerization with retinoid X receptor. Essential for embryonic development. The sequence is that of Deoxyuridine 5'-triphosphate nucleotidohydrolase, mitochondrial (DUT) from Homo sapiens (Human).